Reading from the N-terminus, the 67-residue chain is Andropin (67 aa).

The N-terminal stretch at 1-19 is a signal peptide; it reads MKYFLVLVVLTLILAISVG.

This sequence belongs to the andropin family. Ejaculatory duct of adult males.

The protein localises to the secreted. Functionally, male-specific peptide with moderate activity against Gram-positive bacteria. The protein is Andropin (Anp) of Drosophila orena (Fruit fly).